The sequence spans 93 residues: Large ribosomal subunit protein uL23 (93 aa).

This sequence belongs to the universal ribosomal protein uL23 family. Part of the 50S ribosomal subunit. Contacts protein L29, and trigger factor when it is bound to the ribosome.

Functionally, one of the early assembly proteins it binds 23S rRNA. One of the proteins that surrounds the polypeptide exit tunnel on the outside of the ribosome. Forms the main docking site for trigger factor binding to the ribosome. The chain is Large ribosomal subunit protein uL23 from Aliarcobacter butzleri (strain RM4018) (Arcobacter butzleri).